We begin with the raw amino-acid sequence, 374 residues long: Alanine racemase (374 aa).

Lys35 (proton acceptor; specific for D-alanine) is an active-site residue. N6-(pyridoxal phosphate)lysine is present on Lys35. Substrate is bound at residue Arg133. The Proton acceptor; specific for L-alanine role is filled by Tyr261. Substrate is bound at residue Met315.

It belongs to the alanine racemase family. It depends on pyridoxal 5'-phosphate as a cofactor.

It carries out the reaction L-alanine = D-alanine. It participates in amino-acid biosynthesis; D-alanine biosynthesis; D-alanine from L-alanine: step 1/1. Its function is as follows. Catalyzes the interconversion of L-alanine and D-alanine. May also act on other amino acids. This Psychrobacter sp. (strain PRwf-1) protein is Alanine racemase (alr).